The following is a 386-amino-acid chain: Phosphoglycerate kinase (386 aa).

Residues 21 to 23, Arg-36, 59 to 62, Arg-113, and Arg-146 each bind substrate; these read DLN and HLGR. ATP contacts are provided by residues Lys-197, Glu-314, and 340 to 343; that span reads GGDT.

This sequence belongs to the phosphoglycerate kinase family. As to quaternary structure, monomer.

It is found in the cytoplasm. The catalysed reaction is (2R)-3-phosphoglycerate + ATP = (2R)-3-phospho-glyceroyl phosphate + ADP. It functions in the pathway carbohydrate degradation; glycolysis; pyruvate from D-glyceraldehyde 3-phosphate: step 2/5. The sequence is that of Phosphoglycerate kinase from Ectopseudomonas mendocina (strain ymp) (Pseudomonas mendocina).